We begin with the raw amino-acid sequence, 94 residues long: PqqA binding protein (94 aa).

This sequence belongs to the PqqD family. Monomer. Interacts with PqqE.

Its pathway is cofactor biosynthesis; pyrroloquinoline quinone biosynthesis. Functionally, functions as a PqqA binding protein and presents PqqA to PqqE, in the pyrroloquinoline quinone (PQQ) biosynthetic pathway. The sequence is that of PqqA binding protein from Pseudomonas savastanoi pv. phaseolicola (strain 1448A / Race 6) (Pseudomonas syringae pv. phaseolicola (strain 1448A / Race 6)).